Here is a 207-residue protein sequence, read N- to C-terminus: Uracil phosphoribosyltransferase (207 aa).

5-phospho-alpha-D-ribose 1-diphosphate-binding positions include Arg77, Arg102, and 129–137 (DPMLATGGS). Residues Ile192 and 197 to 199 (GDA) each bind uracil. A 5-phospho-alpha-D-ribose 1-diphosphate-binding site is contributed by Asp198.

This sequence belongs to the UPRTase family. Mg(2+) is required as a cofactor.

The catalysed reaction is UMP + diphosphate = 5-phospho-alpha-D-ribose 1-diphosphate + uracil. It participates in pyrimidine metabolism; UMP biosynthesis via salvage pathway; UMP from uracil: step 1/1. Its activity is regulated as follows. Allosterically activated by GTP. Catalyzes the conversion of uracil and 5-phospho-alpha-D-ribose 1-diphosphate (PRPP) to UMP and diphosphate. This Mycoplasma mobile (strain ATCC 43663 / 163K / NCTC 11711) (Mesomycoplasma mobile) protein is Uracil phosphoribosyltransferase.